The sequence spans 152 residues: Serglycin (152 aa).

A signal peptide spans 1–25 (MQVPVGSRLVLALAFVLVWGSSVQG). The propeptide at 26–74 (YPARRARYQWVRCKPNGFFANCIEEKGPQFDLIDESNNIGPPMNNPVLM) is activation peptide. The cysteines at positions 38 and 47 are disulfide-linked. A disordered region spans residues 66 to 115 (PPMNNPVLMEGPSKDFISNYDDYGSGSGSGSGSGSGSGSGSGSGFLGDME). A run of 10 repeats spans residues 89–90 (GS), 91–92 (GS), 93–94 (GS), 95–96 (GS), 97–98 (GS), 99–100 (GS), 101–102 (GS), 103–104 (GS), 105–106 (GS), and 107–108 (GS). The 10 X 2 AA tandem repeats of G-S stretch occupies residues 89–108 (GSGSGSGSGSGSGSGSGSGS). Residues 90 to 110 (SGSGSGSGSGSGSGSGSGSGF) show a composition bias toward gly residues. O-linked (Xyl...) (glycosaminoglycan) serine glycosylation is found at S92 and S94. Residues S98, S100, S102, S104, S106, and S108 are each glycosylated (O-linked (Xyl...) (glycosaminoglycan) serine).

This sequence belongs to the serglycin family. As to quaternary structure, binds to activated CD44 and to GZMB. In terms of processing, O-glycosylated; contains chondroitin sulfate and heparan sulfate.

The protein resides in the cytoplasmic granule. The protein localises to the cytolytic granule. Its subcellular location is the secreted. It localises to the extracellular space. It is found in the golgi apparatus. Functionally, plays a role in formation of mast cell secretory granules and mediates storage of various compounds in secretory vesicles. Required for storage of some proteases in both connective tissue and mucosal mast cells and for storage of granzyme B in T-lymphocytes. Plays a role in localizing neutrophil elastase in azurophil granules of neutrophils. Mediates processing of MMP2. Plays a role in cytotoxic cell granule-mediated apoptosis by forming a complex with granzyme B which is delivered to cells by perforin to induce apoptosis. Regulates the secretion of TNF-alpha and may also regulate protease secretion. Inhibits bone mineralization. This chain is Serglycin (Srgn), found in Mus musculus (Mouse).